Reading from the N-terminus, the 71-residue chain is Large ribosomal subunit protein bL31 (71 aa).

The Zn(2+) site is built by cysteine 16, cysteine 18, cysteine 38, and cysteine 41.

This sequence belongs to the bacterial ribosomal protein bL31 family. Type A subfamily. In terms of assembly, part of the 50S ribosomal subunit. The cofactor is Zn(2+).

Its function is as follows. Binds the 23S rRNA. The polypeptide is Large ribosomal subunit protein bL31 (Francisella tularensis subsp. novicida (strain U112)).